The following is a 66-amino-acid chain: Beta-toxin Cbo3 (66 aa).

The 66-residue stretch at 1-66 (KEGYIVNYHD…VWPLPKKTCN (66 aa)) folds into the LCN-type CS-alpha/beta domain. 4 disulfides stabilise this stretch: Cys12-Cys65, Cys16-Cys41, Cys25-Cys46, and Cys29-Cys48. Asn66 carries the post-translational modification Asparagine amide.

This sequence belongs to the long (4 C-C) scorpion toxin superfamily. Sodium channel inhibitor family. Beta subfamily. In terms of tissue distribution, expressed by the venom gland.

It is found in the secreted. Functionally, beta toxins bind voltage-independently at site-4 of sodium channels and shift the voltage of activation toward more negative potentials thereby affecting sodium channel activation and promoting spontaneous and repetitive firing. A mixture of Cbo2 and Cbo3 is weakly active on the human voltage-gated sodium channels Nav1.4/SCN4A and Nav1.6/SCN8A when tested at 200 nM. In vivo, is toxic to mice when intraperitoneally injected. The chain is Beta-toxin Cbo3 from Centruroides bonito (Scorpion).